The primary structure comprises 222 residues: Glutathione S-transferase A3 (222 aa).

Ala2 carries the post-translational modification N-acetylalanine. Positions 3–83 constitute a GST N-terminal domain; that stretch reads GKPKLHYFNG…YIASKYNLYG (81 aa). At Lys4 the chain carries N6-succinyllysine. Residues Tyr9, Arg45, 54-55, and 67-68 contribute to the glutathione site; these read QV and QT. A GST C-terminal domain is found at 85–207; that stretch reads DIKERALIDM…LQPGSPRKPP (123 aa).

Belongs to the GST superfamily. Alpha family. Homodimer.

It is found in the cytoplasm. It catalyses the reaction RX + glutathione = an S-substituted glutathione + a halide anion + H(+). The catalysed reaction is androst-5-ene-3,17-dione = androst-4-ene-3,17-dione. It carries out the reaction pregn-5-ene-3,20-dione = progesterone. Its function is as follows. Conjugation of reduced glutathione to a wide number of exogenous and endogenous hydrophobic electrophiles. Catalyzes isomerization reactions that contribute to the biosynthesis of steroid hormones. Efficiently catalyze obligatory double-bond isomerizations of delta(5)-androstene-3,17-dione and delta(5)-pregnene-3,20-dione, precursors to testosterone and progesterone, respectively. Has substantial activity toward aflatoxin B1-8,9-epoxide. This is Glutathione S-transferase A3 from Homo sapiens (Human).